Reading from the N-terminus, the 379-residue chain is Cytochrome b (379 aa).

Helical transmembrane passes span 33-53 (FGSL…FLAM), 77-98 (WLIR…FIHV), 113-133 (WNIG…GYVL), and 178-198 (FFAF…VHLL). Heme b is bound by residues His83 and His97. Positions 182 and 196 each coordinate heme b. His201 lines the a ubiquinone pocket. 4 consecutive transmembrane segments (helical) span residues 226–246 (TKDL…TLFF), 288–308 (LGGV…PLLN), 320–340 (ITQT…WIGG), and 347–367 (FTTI…ILIP).

This sequence belongs to the cytochrome b family. As to quaternary structure, the cytochrome bc1 complex contains 11 subunits: 3 respiratory subunits (MT-CYB, CYC1 and UQCRFS1), 2 core proteins (UQCRC1 and UQCRC2) and 6 low-molecular weight proteins (UQCRH/QCR6, UQCRB/QCR7, UQCRQ/QCR8, UQCR10/QCR9, UQCR11/QCR10 and a cleavage product of UQCRFS1). This cytochrome bc1 complex then forms a dimer. Heme b is required as a cofactor.

Its subcellular location is the mitochondrion inner membrane. In terms of biological role, component of the ubiquinol-cytochrome c reductase complex (complex III or cytochrome b-c1 complex) that is part of the mitochondrial respiratory chain. The b-c1 complex mediates electron transfer from ubiquinol to cytochrome c. Contributes to the generation of a proton gradient across the mitochondrial membrane that is then used for ATP synthesis. The chain is Cytochrome b (MT-CYB) from Akodon azarae (Azara's grass mouse).